We begin with the raw amino-acid sequence, 248 residues long: Segregation and condensation protein A (248 aa).

This sequence belongs to the ScpA family. As to quaternary structure, component of a cohesin-like complex composed of ScpA, ScpB and the Smc homodimer, in which ScpA and ScpB bind to the head domain of Smc. The presence of the three proteins is required for the association of the complex with DNA.

It is found in the cytoplasm. In terms of biological role, participates in chromosomal partition during cell division. May act via the formation of a condensin-like complex containing Smc and ScpB that pull DNA away from mid-cell into both cell halves. This chain is Segregation and condensation protein A, found in Bacillus cytotoxicus (strain DSM 22905 / CIP 110041 / 391-98 / NVH 391-98).